An 80-amino-acid polypeptide reads, in one-letter code: Anaphase-promoting complex subunit hcn1 (80 aa).

Met-1 bears the N-acetylmethionine mark. The interval Gln-26–Ile-54 is disordered. Over residues Ala-37 to Ile-54 the composition is skewed to basic and acidic residues.

In terms of assembly, the APC/C is composed of at least 13 subunits: apc1, apc2, nuc2, apc4, apc5, cut9, apc8, apc10, apc11, hcn1, apc13, apc14 and apc15. Interacts directly (via N-terminus) with cut9.

Functionally, component of the anaphase promoting complex/cyclosome (APC/C), a cell cycle-regulated E3 ubiquitin-protein ligase complex that controls progression through mitosis and the G1 phase of the cell cycle. The APC/C is thought to confer substrate specificity and, in the presence of ubiquitin-conjugating E2 enzymes, it catalyzes the formation of protein-ubiquitin conjugates that are subsequently degraded by the 26S proteasome. Has a role in assembling cut9 in the 20S APC/cyclosome. The chain is Anaphase-promoting complex subunit hcn1 (hcn1) from Schizosaccharomyces pombe (strain 972 / ATCC 24843) (Fission yeast).